Consider the following 272-residue polypeptide: Large ribosomal subunit protein uL4 (272 aa).

Belongs to the universal ribosomal protein uL4 family. Part of the 50S ribosomal subunit.

In terms of biological role, one of the primary rRNA binding proteins, this protein initially binds near the 5'-end of the 23S rRNA. It is important during the early stages of 50S assembly. It makes multiple contacts with different domains of the 23S rRNA in the assembled 50S subunit and ribosome. Functionally, forms part of the polypeptide exit tunnel. In Aeropyrum pernix (strain ATCC 700893 / DSM 11879 / JCM 9820 / NBRC 100138 / K1), this protein is Large ribosomal subunit protein uL4.